A 574-amino-acid polypeptide reads, in one-letter code: Putative ABC transporter ATP-binding protein VVA0347 (574 aa).

ABC transporter domains lie at 3–244 and 299–533; these read IEFS…GIRE and LDVR…ANLT. ATP-binding positions include 37–44 and 332–339; these read GPSGSGKS and GKNGSGKS.

It belongs to the ABC transporter superfamily.

The protein localises to the cell inner membrane. Functionally, probably part of an ABC transporter complex. Responsible for energy coupling to the transport system. This chain is Putative ABC transporter ATP-binding protein VVA0347, found in Vibrio vulnificus (strain YJ016).